We begin with the raw amino-acid sequence, 208 residues long: 28 kDa heat- and acid-stable phosphoprotein homolog (208 aa).

2 disordered regions span residues 1 to 133 (MAGG…VTKK) and 145 to 208 (LSRR…LGLA). The segment covering 16-44 (FGRDYERSKGKISRDRVYDEEDIIKRNQE) has biased composition (basic and acidic residues). Low complexity-rich tracts occupy residues 52–69 (GSES…NKSK) and 84–100 (RNPN…PTTK). The segment covering 105–121 (SDSEDDSDKESDSEDEI) has biased composition (acidic residues). A coiled-coil region spans residues 137-206 (INVNAKVELS…EKMAERRRLG (70 aa)). 2 stretches are compositionally biased toward basic and acidic residues: residues 145 to 154 (LSRREKEELA) and 162 to 208 (QNEK…LGLA).

Belongs to the PDAP1 family.

The chain is 28 kDa heat- and acid-stable phosphoprotein homolog from Dictyostelium discoideum (Social amoeba).